Reading from the N-terminus, the 215-residue chain is Vesicle-trafficking protein SEC22b-A (215 aa).

Over 1 to 190 (MVLQTMIVRV…RSDAKYLNTR (190 aa)) the chain is Cytoplasmic. Positions 6–119 (MIVRVADSLP…YSFIEFDTYI (114 aa)) constitute a Longin domain. Residues 134–194 (NLGNINSELH…KYLNTRSTYA (61 aa)) form the v-SNARE coiled-coil homology domain. Residues 191–213 (STYAKVAAGAVIIITLIIYVRFW) form a helical membrane-spanning segment. Topologically, residues 214–215 (WL) are lumenal.

The protein belongs to the synaptobrevin family. As to quaternary structure, component of 2 distinct SNARE complexes.

It is found in the endoplasmic reticulum membrane. The protein resides in the endoplasmic reticulum-Golgi intermediate compartment membrane. The protein localises to the golgi apparatus. Its subcellular location is the cis-Golgi network membrane. It localises to the trans-Golgi network membrane. It is found in the melanosome. In terms of biological role, SNARE involved in targeting and fusion of ER-derived transport vesicles with the Golgi complex as well as Golgi-derived retrograde transport vesicles with the ER. This is Vesicle-trafficking protein SEC22b-A from Danio rerio (Zebrafish).